The chain runs to 169 residues: Crossover junction endodeoxyribonuclease RuvC (169 aa).

Active-site residues include Asp-7, Glu-67, and Asp-139. Mg(2+) contacts are provided by Asp-7, Glu-67, and Asp-139.

Belongs to the RuvC family. Homodimer which binds Holliday junction (HJ) DNA. The HJ becomes 2-fold symmetrical on binding to RuvC with unstacked arms; it has a different conformation from HJ DNA in complex with RuvA. In the full resolvosome a probable DNA-RuvA(4)-RuvB(12)-RuvC(2) complex forms which resolves the HJ. It depends on Mg(2+) as a cofactor.

It is found in the cytoplasm. The catalysed reaction is Endonucleolytic cleavage at a junction such as a reciprocal single-stranded crossover between two homologous DNA duplexes (Holliday junction).. In terms of biological role, the RuvA-RuvB-RuvC complex processes Holliday junction (HJ) DNA during genetic recombination and DNA repair. Endonuclease that resolves HJ intermediates. Cleaves cruciform DNA by making single-stranded nicks across the HJ at symmetrical positions within the homologous arms, yielding a 5'-phosphate and a 3'-hydroxyl group; requires a central core of homology in the junction. The consensus cleavage sequence is 5'-(A/T)TT(C/G)-3'. Cleavage occurs on the 3'-side of the TT dinucleotide at the point of strand exchange. HJ branch migration catalyzed by RuvA-RuvB allows RuvC to scan DNA until it finds its consensus sequence, where it cleaves and resolves the cruciform DNA. The polypeptide is Crossover junction endodeoxyribonuclease RuvC (Rhodospirillum rubrum (strain ATCC 11170 / ATH 1.1.1 / DSM 467 / LMG 4362 / NCIMB 8255 / S1)).